Reading from the N-terminus, the 462-residue chain is Exodeoxyribonuclease 7 large subunit (462 aa).

Belongs to the XseA family. As to quaternary structure, heterooligomer composed of large and small subunits.

It localises to the cytoplasm. It catalyses the reaction Exonucleolytic cleavage in either 5'- to 3'- or 3'- to 5'-direction to yield nucleoside 5'-phosphates.. Its function is as follows. Bidirectionally degrades single-stranded DNA into large acid-insoluble oligonucleotides, which are then degraded further into small acid-soluble oligonucleotides. The sequence is that of Exodeoxyribonuclease 7 large subunit from Pectobacterium atrosepticum (strain SCRI 1043 / ATCC BAA-672) (Erwinia carotovora subsp. atroseptica).